The following is a 510-amino-acid chain: GPI mannosyltransferase 3 (510 aa).

Helical transmembrane passes span 17 to 37, 96 to 116, 123 to 143, 145 to 163, 179 to 199, 221 to 241, and 269 to 289; these read TVLV…KTFF, IAPK…TWKL, PAEA…WFFL, RTFS…LNYW, LFIG…WAVL, VALV…EPVF, and YEAL…GLWI. The N-linked (GlcNAc...) asparagine glycan is linked to Asn-290. The next 2 helical transmembrane spans lie at 316–336 and 342–362; these read FIYP…TQTP and WLVW…SQVH.

It belongs to the glycosyltransferase 22 family. PIGB subfamily.

It is found in the endoplasmic reticulum membrane. It functions in the pathway glycolipid biosynthesis; glycosylphosphatidylinositol-anchor biosynthesis. Its function is as follows. Mannosyltransferase involved in glycosylphosphatidylinositol-anchor biosynthesis. Transfers the third mannose to Man2-GlcN-acyl-PI during GPI precursor assembly. This is GPI mannosyltransferase 3 (GPI10) from Yarrowia lipolytica (strain CLIB 122 / E 150) (Yeast).